A 136-amino-acid polypeptide reads, in one-letter code: Large ribosomal subunit protein uL16 (136 aa).

Belongs to the universal ribosomal protein uL16 family. Part of the 50S ribosomal subunit.

Its function is as follows. Binds 23S rRNA and is also seen to make contacts with the A and possibly P site tRNAs. The protein is Large ribosomal subunit protein uL16 of Rickettsia felis (strain ATCC VR-1525 / URRWXCal2) (Rickettsia azadi).